The chain runs to 270 residues: B3 domain-containing protein Os03g0212300 (270 aa).

DNA-binding regions (TF-B3) lie at residues 13-110 (FEFF…FDET) and 158-265 (VTLR…RKAD).

It localises to the nucleus. This chain is B3 domain-containing protein Os03g0212300, found in Oryza sativa subsp. japonica (Rice).